A 413-amino-acid polypeptide reads, in one-letter code: Serine protease inhibitor A3L (413 aa).

The signal sequence occupies residues 1–28; sequence MAFIAALGLLMAGICPAVLCDGTLGRDT. Position 30 is a phosphoserine (Ser30). N-linked (GlcNAc...) asparagine glycans are attached at residues Asn102, Asn182, Asn220, and Asn267. The RCL stretch occupies residues 365 to 389; it reads GTEATAATGVATVIRRQPRTLNFNR.

This sequence belongs to the serpin family. N-glycosylated. As to expression, liver.

It is found in the secreted. In Rattus norvegicus (Rat), this protein is Serine protease inhibitor A3L (Serpina3l).